The following is a 407-amino-acid chain: Phosphonoacetate hydrolase (407 aa).

Residues Asp-25, Thr-64, Asp-202, His-206, Asp-241, His-242, and His-368 each coordinate Zn(2+). The substrate site is built by Thr-64 and Asp-202. Positions 242 and 368 each coordinate substrate.

Belongs to the alkaline phosphatase family. PhnA subfamily. As to quaternary structure, homodimer. The cofactor is Zn(2+).

It catalyses the reaction phosphonoacetate + H2O = acetate + phosphate + H(+). Functionally, specifically hydrolyzes phosphonoacetate. Does not have activity on other organophosphonates or acetates. The protein is Phosphonoacetate hydrolase of Pseudomonas putida (Arthrobacter siderocapsulatus).